The chain runs to 1174 residues: Male determiner protein Mdmd(III) (1174 aa).

A compositionally biased stretch (basic and acidic residues) spans 1-15 (MNATDAESRKPENKP). 3 disordered regions span residues 1–51 (MNAT…SGQR), 80–109 (KDGSNEMLPKEDSINTNHNYTTDSNEHPVE), and 136–259 (KQLS…LRRS). Positions 16-35 (SSESSSSGSTSGSSDGEVSS) are enriched in low complexity. The segment covering 36 to 47 (KTYFKNNKSKVL) has biased composition (polar residues). Basic and acidic residues predominate over residues 80-92 (KDGSNEMLPKEDS). Residues 93–102 (INTNHNYTTD) are compositionally biased toward polar residues. Positions 138–153 (LSAYRSRSRSTRLSYS) are enriched in low complexity. The segment covering 167–180 (SRYKKSVLRNRRTS) has biased composition (basic residues). The span at 183-200 (HGRDSSTTKRSVSRDKDN) shows a compositional bias: basic and acidic residues. Basic residues predominate over residues 201–223 (RLRRRIGSSRSHTRSHSRFRRSE). Residues 235–259 (RSQERRHERRRSMSSDYERIALRRS) are compositionally biased toward basic and acidic residues. The 184-residue stretch at 348-531 (KKYIHGYINK…KVLFQVRRDG (184 aa)) folds into the MIF4G domain. One can recognise an MI domain in the interval 641–757 (ALRRTIYLTL…SWDVLDCIKL (117 aa)). Residues 840–857 (SAPSSSSSSSLSSELSAP) show a composition bias toward low complexity. 2 disordered regions span residues 840-1045 (SAPS…SRTK) and 1096-1133 (KDNYGNRQNHEISQRHDSEIKRRREERKKRHHEKNHSR). A compositionally biased stretch (basic residues) spans 869-909 (KKKHKGKNKKMTKKKNPSKKKEKTKKFVGKNKIAAKNKTIK). Positions 910-924 (RRTDKDNSSSKDNFL) are enriched in basic and acidic residues. Over residues 926-957 (SESSSNESISLDSLSSELFAPSSYSSSESSND) the composition is skewed to low complexity. A compositionally biased stretch (basic residues) spans 963–1001 (KHKGKNKKMTKKKNPSNKKEKTKKKLSKNKKAPNKNTKK). Residues 1010–1020 (SSESSISESKS) are compositionally biased toward low complexity. Positions 1034–1045 (RKKRVTSKSRTK) are enriched in basic residues. The segment covering 1103 to 1118 (QNHEISQRHDSEIKRR) has biased composition (basic and acidic residues). Basic residues predominate over residues 1119–1130 (REERKKRHHEKN).

Belongs to the CWC22 family. As to quaternary structure, component of the spliceosome C complex.

It localises to the nucleus speckle. Its function is as follows. Male determiner protein (M-factor) that controls male somatic sexual differentiation. Acts as a dominant factor that regulates the mRNA splicing of transformer (tra) and doublesex (dsx) transcripts and promotes expression of male splice forms of tra and dsx. Probably acts as a component of the spliceosome C complex required for mRNA splicing factor and exon-junction complex (EJC) assembly. Hinders eIF4AIII from non-specifically binding RNA and escorts it to the splicing machinery to promote EJC assembly on mature mRNAs. The protein is Male determiner protein Mdmd(III) of Musca domestica (House fly).